The following is a 274-amino-acid chain: 2,3,4,5-tetrahydropyridine-2,6-dicarboxylate N-succinyltransferase (274 aa).

It belongs to the transferase hexapeptide repeat family.

The protein localises to the cytoplasm. It catalyses the reaction (S)-2,3,4,5-tetrahydrodipicolinate + succinyl-CoA + H2O = (S)-2-succinylamino-6-oxoheptanedioate + CoA. It functions in the pathway amino-acid biosynthesis; L-lysine biosynthesis via DAP pathway; LL-2,6-diaminopimelate from (S)-tetrahydrodipicolinate (succinylase route): step 1/3. The polypeptide is 2,3,4,5-tetrahydropyridine-2,6-dicarboxylate N-succinyltransferase (Delftia acidovorans (strain DSM 14801 / SPH-1)).